The primary structure comprises 414 residues: Methylthioribose-1-phosphate isomerase (414 aa).

Positions 205–215 are enriched in polar residues; it reads SQSQGSENPPS. The tract at residues 205-224 is disordered; it reads SQSQGSENPPSKKQKKDAAP. The active-site Proton donor is Asp283.

The protein belongs to the eIF-2B alpha/beta/delta subunits family. MtnA subfamily.

The protein localises to the cytoplasm. The protein resides in the nucleus. The enzyme catalyses 5-(methylsulfanyl)-alpha-D-ribose 1-phosphate = 5-(methylsulfanyl)-D-ribulose 1-phosphate. Its pathway is amino-acid biosynthesis; L-methionine biosynthesis via salvage pathway; L-methionine from S-methyl-5-thio-alpha-D-ribose 1-phosphate: step 1/6. In terms of biological role, catalyzes the interconversion of methylthioribose-1-phosphate (MTR-1-P) into methylthioribulose-1-phosphate (MTRu-1-P). The sequence is that of Methylthioribose-1-phosphate isomerase from Zygosaccharomyces rouxii (strain ATCC 2623 / CBS 732 / NBRC 1130 / NCYC 568 / NRRL Y-229).